The chain runs to 57 residues: Large ribosomal subunit protein bL33 (57 aa).

The protein belongs to the bacterial ribosomal protein bL33 family.

The chain is Large ribosomal subunit protein bL33 from Shewanella amazonensis (strain ATCC BAA-1098 / SB2B).